The primary structure comprises 520 residues: Transposase for insertion sequence element IS21-like (520 aa).

Residues 13-78 (YMWYKVRELQ…KYEEYVRGTL (66 aa)) form the HTH IS21-type domain. The 177-residue stretch at 136–312 (LPETPYGEYA…VPSEEFAVEK (177 aa)) folds into the Integrase catalytic domain.

Belongs to the transposase IS21/IS408/IS1162 family.

Involved in the transposition of the insertion sequence. In Bacteroides fragilis, this protein is Transposase for insertion sequence element IS21-like (tnpA).